Here is a 644-residue protein sequence, read N- to C-terminus: Type III restriction-modification enzyme EcoP15I Mod subunit (644 aa).

The segment at 123–126 is binding of S-adenosyl methionine; the sequence is DPPY.

Belongs to the N(4)/N(6)-methyltransferase family. In terms of assembly, forms a homodimer capable of methylating the target sequence in the absence of Res. A heterotetramer with stoichiometry Res(2)Mod(2). A heterotrimer with stoichiometry Res(1)Mod(2).

The enzyme catalyses a 2'-deoxyadenosine in DNA + S-adenosyl-L-methionine = an N(6)-methyl-2'-deoxyadenosine in DNA + S-adenosyl-L-homocysteine + H(+). Functionally, a beta subtype methylase that binds the system-specific DNA recognition site 5'-CAGCAG-3' and methylates A-5 (of only 1 strand as the other does not have an A residue). DNA restriction requires both the Res and Mod subunits. The A-5 nucleotide flips into the catalytic pocket of one Mod subunit for modification, while the other Mod subunit makes most of the DNA sequence-specific contacts. This chain is Type III restriction-modification enzyme EcoP15I Mod subunit, found in Escherichia coli.